The primary structure comprises 1191 residues: uncharacterized protein (1191 aa).

11 WD repeats span residues 558 to 588 (GHRD…HLWT), 599 to 629 (GHTG…KIWD), 640 to 670 (GHQD…RLWH), 682 to 712 (GHTK…RLWD), 723 to 753 (LPEV…RLWT), 764 to 794 (GHDE…IHWS), 805 to 835 (GYPE…KVWD), 995 to 1025 (QRKE…TLWN), 1036 to 1066 (AHGD…KIWS), 1077 to 1107 (SDPL…RLWD), and 1118 to 1148 (STSG…QSWP).

This is an uncharacterized protein from Synechocystis sp. (strain ATCC 27184 / PCC 6803 / Kazusa).